The chain runs to 491 residues: Probable cytosol aminopeptidase (491 aa).

Lysine 260 and aspartate 265 together coordinate Mn(2+). The active site involves lysine 272. Positions 284, 343, and 345 each coordinate Mn(2+). The active site involves arginine 347.

Belongs to the peptidase M17 family. The cofactor is Mn(2+).

Its subcellular location is the cytoplasm. It catalyses the reaction Release of an N-terminal amino acid, Xaa-|-Yaa-, in which Xaa is preferably Leu, but may be other amino acids including Pro although not Arg or Lys, and Yaa may be Pro. Amino acid amides and methyl esters are also readily hydrolyzed, but rates on arylamides are exceedingly low.. It carries out the reaction Release of an N-terminal amino acid, preferentially leucine, but not glutamic or aspartic acids.. Presumably involved in the processing and regular turnover of intracellular proteins. Catalyzes the removal of unsubstituted N-terminal amino acids from various peptides. This Trichormus variabilis (strain ATCC 29413 / PCC 7937) (Anabaena variabilis) protein is Probable cytosol aminopeptidase.